A 257-amino-acid polypeptide reads, in one-letter code: MVSWMICRLVVLIFGMLYPAYASYKAVKSKNIREYVRWMMYWIVFAIFMAAETFTDIFISWFPFYYEFKMAFVLWLLSPYTKGASLLYRKFVHPSLSRHEKEIDACIVQAKERSYETMLSFGKRSLNIAASAAVQAATKSQGALAGRLRSFSMQDLRSIPDTPVPTYQDPLYLEDQVPRRRPPIGYRPGGLQGSDTEDECWSDNEIVPQPPVRPREKPLGRSQSLRVVKRKPLTREGTSRSLKVRTRKKAMPSDMDS.

A run of 2 helical transmembrane segments spans residues 1-21 and 42-62; these read MVSW…YPAY and WIVF…ISWF. Residues Ser-152 and Ser-194 each carry the phosphoserine modification. A disordered region spans residues 177-257; that stretch reads VPRRRPPIGY…KKAMPSDMDS (81 aa). At Thr-196 the chain carries Phosphothreonine. Phosphoserine occurs at positions 202 and 253.

This sequence belongs to the DP1 family.

The protein localises to the endoplasmic reticulum membrane. Functionally, microtubule-binding protein required to ensure proper cell division and nuclear envelope reassembly by sequestering the endoplasmic reticulum away from chromosomes during mitosis. Probably acts by clearing the endoplasmic reticulum membrane from metaphase chromosomes. In Mus musculus (Mouse), this protein is Receptor expression-enhancing protein 4 (Reep4).